The sequence spans 481 residues: Bifunctional protein GlmU (481 aa).

A pyrophosphorylase region spans residues 1 to 235 (MTHKERPLDV…PDEVMGANDR (235 aa)). UDP-N-acetyl-alpha-D-glucosamine-binding positions include 13–16 (LAAG), K27, Q78, 83–84 (GT), 107–109 (YGD), G146, E161, N176, and N233. Mg(2+) is bound at residue D109. N233 is a Mg(2+) binding site. Residues 236-256 (VQLAQAAAVLRRRINTAHMQA) form a linker region. The N-acetyltransferase stretch occupies residues 257–481 (GVTLQDPSTI…PWLAGWLERQ (225 aa)). UDP-N-acetyl-alpha-D-glucosamine-binding residues include R339 and K357. Residue H369 is the Proton acceptor of the active site. UDP-N-acetyl-alpha-D-glucosamine contacts are provided by Y372 and N383. Acetyl-CoA is bound by residues A386, S411, A429, and R446.

This sequence in the N-terminal section; belongs to the N-acetylglucosamine-1-phosphate uridyltransferase family. In the C-terminal section; belongs to the transferase hexapeptide repeat family. In terms of assembly, homotrimer. The cofactor is Mg(2+).

It is found in the cytoplasm. It catalyses the reaction alpha-D-glucosamine 1-phosphate + acetyl-CoA = N-acetyl-alpha-D-glucosamine 1-phosphate + CoA + H(+). The catalysed reaction is N-acetyl-alpha-D-glucosamine 1-phosphate + UTP + H(+) = UDP-N-acetyl-alpha-D-glucosamine + diphosphate. It functions in the pathway nucleotide-sugar biosynthesis; UDP-N-acetyl-alpha-D-glucosamine biosynthesis; N-acetyl-alpha-D-glucosamine 1-phosphate from alpha-D-glucosamine 6-phosphate (route II): step 2/2. Its pathway is nucleotide-sugar biosynthesis; UDP-N-acetyl-alpha-D-glucosamine biosynthesis; UDP-N-acetyl-alpha-D-glucosamine from N-acetyl-alpha-D-glucosamine 1-phosphate: step 1/1. It participates in bacterial outer membrane biogenesis; LPS lipid A biosynthesis. In terms of biological role, catalyzes the last two sequential reactions in the de novo biosynthetic pathway for UDP-N-acetylglucosamine (UDP-GlcNAc). The C-terminal domain catalyzes the transfer of acetyl group from acetyl coenzyme A to glucosamine-1-phosphate (GlcN-1-P) to produce N-acetylglucosamine-1-phosphate (GlcNAc-1-P), which is converted into UDP-GlcNAc by the transfer of uridine 5-monophosphate (from uridine 5-triphosphate), a reaction catalyzed by the N-terminal domain. The chain is Bifunctional protein GlmU from Deinococcus geothermalis (strain DSM 11300 / CIP 105573 / AG-3a).